A 414-amino-acid polypeptide reads, in one-letter code: ORC1-type DNA replication protein 1 (414 aa).

Residues 70-74 (TGKTA), Y213, and R225 contribute to the ATP site.

It belongs to the CDC6/cdc18 family.

Its function is as follows. Involved in regulation of DNA replication. In Methanosarcina mazei (strain ATCC BAA-159 / DSM 3647 / Goe1 / Go1 / JCM 11833 / OCM 88) (Methanosarcina frisia), this protein is ORC1-type DNA replication protein 1 (cdc6-1).